Here is a 794-residue protein sequence, read N- to C-terminus: Ubiquitin carboxyl-terminal hydrolase 10 (794 aa).

N-acetylalanine is present on Ala-2. The interaction with p53/TP53 stretch occupies residues 2–99 (ALHNPQYIFG…ILGCPTSKKT (98 aa)). The interval 6 to 21 (PQYIFGDFSPDEFNQF) is G3BP1-binding. 2 positions are modified to phosphothreonine: Thr-24 and Thr-99. Positions 123-164 (ESSSNAEAETLENDSGAGGLGQRERKKKKKRPPGYYSYLKDG) are disordered. A phosphoserine mark is found at Ser-209, Ser-224, and Ser-316. Positions 303-326 (ESADLDPAKPESQSPPAESALSVS) are disordered. Polar residues predominate over residues 313 to 326 (ESQSPPAESALSVS). Residue Ser-332 is modified to Phosphoserine; by ATM. 2 positions are modified to phosphoserine: Ser-361 and Ser-366. The USP domain occupies 411-791 (RGLINKGNWC…TAYLLYYRRV (381 aa)). The active-site Nucleophile is the Cys-420. At Ser-543 the chain carries Phosphoserine. Positions 546 to 588 (HEKHSVSNGPGSHLIEDEELEDTGEGSEDEWEQVGPKNKTSVT) are disordered. Residues 561–577 (EDEELEDTGEGSEDEWE) are compositionally biased toward acidic residues. Phosphothreonine is present on Thr-568. Phosphoserine is present on Ser-572. His-745 functions as the Proton acceptor in the catalytic mechanism.

This sequence belongs to the peptidase C19 family. USP10 subfamily. Found in a deubiquitination complex with TANK, USP10 and ZC3H12A; this complex inhibits genotoxic stress- or interleukin-1-beta (IL1B)-mediated NF-kappa-B activation by promoting IKBKG or TRAF6 deubiquitination. Interacts with IKBKG; this interaction increases in response to DNA damage. Interacts with TANK; this interaction increases in response to DNA damage. Interacts with TRAF6; this interaction increases in response to DNA damage. Interacts with ZC3H12A; this interaction increases in response to DNA damage. Interacts with G3BP1 (via NTF2 domain) and G3BP2 (via NTF2 domain); inhibiting stress granule formation. Post-translationally, phosphorylated by ATM following DNA damage, leading to stabilization and translocation it to the nucleus. Ubiquitinated. Deubiquitinated by USP13.

The protein localises to the cytoplasm. The protein resides in the nucleus. It is found in the early endosome. It catalyses the reaction Thiol-dependent hydrolysis of ester, thioester, amide, peptide and isopeptide bonds formed by the C-terminal Gly of ubiquitin (a 76-residue protein attached to proteins as an intracellular targeting signal).. Its activity is regulated as follows. Specifically inhibited by spautin-1 (specific and potent autophagy inhibitor-1), a derivative of MBCQ that binds to USP10 and inhibits deubiquitinase activity. Regulated by PIK3C3/VPS34-containing complexes. Functionally, hydrolase that can remove conjugated ubiquitin from target proteins such as p53/TP53, RPS2/us5, RPS3/us3, RPS10/eS10, BECN1, SNX3 and CFTR. Acts as an essential regulator of p53/TP53 stability: in unstressed cells, specifically deubiquitinates p53/TP53 in the cytoplasm, leading to counteract MDM2 action and stabilize p53/TP53. Following DNA damage, translocates to the nucleus and deubiquitinates p53/TP53, leading to regulate the p53/TP53-dependent DNA damage response. Component of a regulatory loop that controls autophagy and p53/TP53 levels: mediates deubiquitination of BECN1, a key regulator of autophagy, leading to stabilize the PIK3C3/VPS34-containing complexes. In turn, PIK3C3/VPS34-containing complexes regulate USP10 stability, suggesting the existence of a regulatory system by which PIK3C3/VPS34-containing complexes regulate p53/TP53 protein levels via USP10 and USP13. Does not deubiquitinate MDM2. Plays a key role in 40S ribosome subunit recycling when a ribosome has stalled during translation: acts both by inhibiting formation of stress granules, which store stalled translation pre-initiation complexes, and mediating deubiquitination of 40S ribosome subunits. Acts as a negative regulator of stress granules formation by lowering G3BP1 and G3BP2 valence, thereby preventing G3BP1 and G3BP2 ability to undergo liquid-liquid phase separation (LLPS) and assembly of stress granules. Promotes 40S ribosome subunit recycling following ribosome dissociation in response to ribosome stalling by mediating deubiquitination of 40S ribosomal proteins RPS2/us5, RPS3/us3 and RPS10/eS10, thereby preventing their degradation by the proteasome. Part of a ribosome quality control that takes place when ribosomes have stalled during translation initiation (iRQC): USP10 acts by removing monoubiquitination of RPS2/us5 and RPS3/us3, promoting 40S ribosomal subunit recycling. Deubiquitinates CFTR in early endosomes, enhancing its endocytic recycling. Involved in a TANK-dependent negative feedback response to attenuate NF-kappa-B activation via deubiquitinating IKBKG or TRAF6 in response to interleukin-1-beta (IL1B) stimulation or upon DNA damage. Deubiquitinates TBX21 leading to its stabilization. Plays a negative role in the RLR signaling pathway upon RNA virus infection by blocking the RIGI-mediated MAVS activation. Mechanistically, removes the unanchored 'Lys-63'-linked polyubiquitin chains of MAVS to inhibit its aggregation, essential for its activation. The chain is Ubiquitin carboxyl-terminal hydrolase 10 (Usp10) from Rattus norvegicus (Rat).